The primary structure comprises 500 residues: L-arabinose isomerase (500 aa).

Residues E306, E333, H350, and H450 each contribute to the Mn(2+) site.

It belongs to the arabinose isomerase family. In terms of assembly, homohexamer. Requires Mn(2+) as cofactor.

It carries out the reaction beta-L-arabinopyranose = L-ribulose. The protein operates within carbohydrate degradation; L-arabinose degradation via L-ribulose; D-xylulose 5-phosphate from L-arabinose (bacterial route): step 1/3. In terms of biological role, catalyzes the conversion of L-arabinose to L-ribulose. The chain is L-arabinose isomerase from Shigella flexneri.